The primary structure comprises 1567 residues: ABC multidrug transporter MDR1 (1567 aa).

Residues 1 to 11 are compositionally biased toward pro residues; it reads MASQPPQPPSG. The disordered stretch occupies residues 1–37; sequence MASQPPQPPSGQPDTQYEEYQSEVITETTNRPTPAAD. Residues 22 to 32 are compositionally biased toward polar residues; that stretch reads SEVITETTNRP. 3 N-linked (GlcNAc...) asparagine glycosylation sites follow: Asn149, Asn157, and Asn356. Residues 167-432 form the ABC transporter 1 domain; that stretch reads VQYQDTFLSP…FEEMGWYCPP (266 aa). 6 helical membrane-spanning segments follow: residues 543-563, 571-591, 636-656, 661-681, 691-711, and 798-818; these read STIATNISQIMMALIIGSLFF, GFFAKGSVIFFAILLNGLMSI, IPIKFLLALVFNIIIYFLGGL, AKFFIFFLFTFITILTMSAIF, IPQALALAGVMILALVIYTGF, and LGILLGFLAFFYFVYLVVSEL. N-linked (GlcNAc...) asparagine glycosylation is found at Asn819, Asn895, and Asn912. The 244-residue stretch at 891–1134 folds into the ABC transporter 2 domain; sequence FTWRNVTYDI…LLNYFETHGA (244 aa). Residue 927-934 coordinates ATP; the sequence is GVSGAGKT. Residues 1172 to 1202 are disordered; sequence ESRHVQQELDRIQSETSKRNEGHGQSAEKEP. A helical transmembrane segment spans residues 1231 to 1251; the sequence is IWGKLLLGLTSALFIGFSFFL. A glycan (N-linked (GlcNAc...) asparagine) is linked at Asn1253. Transmembrane regions (helical) follow at residues 1257–1277, 1305–1325, 1345–1365, 1372–1392, and 1498–1518; these read AGLQNSLFSIFMLTTIFSSLV, VFLLANIIVEIPYQILLGIIA, ILLLYCVQFFIFASTFAQMII, ETAGGIATTMFGLMVTFNGVL, and GIGWAYIVFNIFATVALYYLI.

Belongs to the ABC transporter superfamily. ABCG family. PDR (TC 3.A.1.205) subfamily.

The protein resides in the cell membrane. The catalysed reaction is voriconazole(in) + ATP + H2O = voriconazole(out) + ADP + phosphate + H(+). The enzyme catalyses fluconazole(in) + ATP + H2O = fluconazole(out) + ADP + phosphate + H(+). It carries out the reaction (R)-miconazole(in) + ATP + H2O = (R)-miconazole(out) + ADP + phosphate + H(+). It catalyses the reaction (S)-miconazole(in) + ATP + H2O = (S)-miconazole(out) + ADP + phosphate + H(+). In terms of biological role, pleiotropic ABC efflux transporter that may be involved in the modulation susceptibility to a wide range of unrelated cytotoxic compounds. The chain is ABC multidrug transporter MDR1 from Trichophyton equinum (strain ATCC MYA-4606 / CBS 127.97) (Horse ringworm fungus).